The primary structure comprises 117 residues: Protein Wnt-6 (117 aa).

The O-palmitoleoyl serine; by PORCN moiety is linked to residue Ser-1. Cysteines 83 and 98 form a disulfide. An N-linked (GlcNAc...) asparagine glycan is attached at Asn-84.

This sequence belongs to the Wnt family. Post-translationally, palmitoleoylation is required for efficient binding to frizzled receptors. Depalmitoleoylation leads to Wnt signaling pathway inhibition.

It is found in the secreted. It localises to the extracellular space. The protein resides in the extracellular matrix. Functionally, ligand for members of the frizzled family of seven transmembrane receptors. Probable developmental protein. May be a signaling molecule which affects the development of discrete regions of tissues. Is likely to signal over only few cell diameters. In Strongylocentrotus purpuratus (Purple sea urchin), this protein is Protein Wnt-6 (WNT-6).